A 338-amino-acid chain; its full sequence is Limbic system-associated membrane protein (338 aa).

A signal peptide spans 1–28 (MVARAQPDRKQLPLVLLRLLCLLPTGLP). Ig-like C2-type domains are found at residues 29–122 (VRSV…PKTS), 132–214 (PKIS…VRVT), and 219–306 (PTIT…LYLY). Asparagine 40, asparagine 66, asparagine 136, and asparagine 148 each carry an N-linked (GlcNAc...) asparagine glycan. A disulfide bridge links cysteine 53 with cysteine 111. Intrachain disulfides connect cysteine 153–cysteine 197 and cysteine 239–cysteine 290. Asparagine 279, asparagine 287, asparagine 300, and asparagine 315 each carry an N-linked (GlcNAc...) asparagine glycan. Asparagine 315 is lipidated: GPI-anchor amidated asparagine. A propeptide spans 316-338 (GSVSLAVPLWLLAASLLCLLSKC) (removed in mature form).

The protein belongs to the immunoglobulin superfamily. IgLON family.

Its subcellular location is the cell membrane. Mediates selective neuronal growth and axon targeting. Probably serves as a recognition molecule for the formation of limbic connections. This is Limbic system-associated membrane protein from Gallus gallus (Chicken).